The sequence spans 883 residues: Phosphoenolpyruvate carboxylase (883 aa).

Catalysis depends on residues histidine 138 and lysine 546.

This sequence belongs to the PEPCase type 1 family. Mg(2+) is required as a cofactor.

The enzyme catalyses oxaloacetate + phosphate = phosphoenolpyruvate + hydrogencarbonate. Forms oxaloacetate, a four-carbon dicarboxylic acid source for the tricarboxylic acid cycle. This chain is Phosphoenolpyruvate carboxylase, found in Escherichia fergusonii (strain ATCC 35469 / DSM 13698 / CCUG 18766 / IAM 14443 / JCM 21226 / LMG 7866 / NBRC 102419 / NCTC 12128 / CDC 0568-73).